Here is a 126-residue protein sequence, read N- to C-terminus: Chemocyanin (126 aa).

The signal sequence occupies residues 1 to 30; sequence MAQGSGSAERALVLGVVLVFLVFNCEVAES. One can recognise a Phytocyanin domain in the interval 31–126; it reads VVYTVGDGGG…GGLKIAVTAA (96 aa). Residues histidine 69, cysteine 109, and histidine 114 each coordinate Cu cation. Cysteine 82 and cysteine 115 are disulfide-bonded.

As to expression, strongly expressed in stigma and style and to a lesser extent in leaves, ovary and petals. Not detected in pollen tubes, mature anthers or roots.

Its function is as follows. Diffusible chemotropic factor that induces pollen tube chemotropism. The polypeptide is Chemocyanin (Lilium longiflorum (Trumpet lily)).